The sequence spans 593 residues: MLTLQEKLANLPTTPGVYMMKDENGKVIYVGKAVNLRNRVRQYFQNSDMTPKTRLMVKKIKDFEYIVTDTEVEALILECNLIKEYRPKYNVLLRDDKNYQYIKITNEMFPRLVTTRKVEKDGAKYFGPYVSGYSVKQTIELLKSLFMLRTCKRKFPDQLGKGRPCLNFYIERCLGVCKGDIPEEEYQKLVEKAVKVLSGKGDEIVEELKKKMFEYADNLMFEKAQEIKNKITSLEQIITKQKVIYADDRSEDVINYAEDSSNICIVVLVIRNGKLINKEEFVLKNDEEVFERFLEQYYSDVVSVPKEIILPHEVGNGENIEKMIEKLYGFKAKIVVPKQGEKKQLLEMAKKNAEISLVNKQRIENYYIEALLHLKNLLGIEHDIEKIESYDISNLAGADNVGTLVVFEDGKFNKDLYRKFKLKSFEGQDDIRSVKEVLTRRFTNLEKHGRLPDLILIDGGQNQVNAAVEVLRSLGFNIPVAGMVKDDRHKTRDLIYKGQELNIQRDSLVFKLISTIQEETHRFAVKYHRELRKKHLYESILDEIEGIGEKRKIKLFRIFGSIDNLRKASIEEIVKAADIPYDIALKIKEKIGI.

A GIY-YIG domain is found at 13-91 (TTPGVYMMKD…IKEYRPKYNV (79 aa)). The UVR domain maps to 202 to 237 (DEIVEELKKKMFEYADNLMFEKAQEIKNKITSLEQI).

This sequence belongs to the UvrC family. In terms of assembly, interacts with UvrB in an incision complex.

Its subcellular location is the cytoplasm. Its function is as follows. The UvrABC repair system catalyzes the recognition and processing of DNA lesions. UvrC both incises the 5' and 3' sides of the lesion. The N-terminal half is responsible for the 3' incision and the C-terminal half is responsible for the 5' incision. The polypeptide is UvrABC system protein C (Caldicellulosiruptor saccharolyticus (strain ATCC 43494 / DSM 8903 / Tp8T 6331)).